Here is a 332-residue protein sequence, read N- to C-terminus: L-lactate dehydrogenase A chain (332 aa).

NAD(+) contacts are provided by residues 29–57 (GAVG…VEDK) and R99. Residues R106, N138, and R169 each coordinate substrate. N138 contributes to the NAD(+) binding site. H193 serves as the catalytic Proton acceptor. Residue T248 coordinates substrate.

Belongs to the LDH/MDH superfamily. LDH family. In terms of assembly, homotetramer.

The protein localises to the cytoplasm. The enzyme catalyses (S)-lactate + NAD(+) = pyruvate + NADH + H(+). The protein operates within fermentation; pyruvate fermentation to lactate; (S)-lactate from pyruvate: step 1/1. In terms of biological role, interconverts simultaneously and stereospecifically pyruvate and lactate with concomitant interconversion of NADH and NAD(+). This chain is L-lactate dehydrogenase A chain (LDHA), found in Gallus gallus (Chicken).